We begin with the raw amino-acid sequence, 390 residues long: Putative transposase y4qE (390 aa).

Belongs to the transposase IS1111A/IS1328/IS1533 family.

The protein is Putative transposase y4qE of Sinorhizobium fredii (strain NBRC 101917 / NGR234).